The chain runs to 364 residues: Peptide chain release factor 1 (364 aa).

Gln-238 carries the post-translational modification N5-methylglutamine. The segment covering 286-297 (DEKRQAEEDSTR) has biased composition (basic and acidic residues). Residues 286–315 (DEKRQAEEDSTRRNLVGSGDRSERIRTYNY) form a disordered region.

This sequence belongs to the prokaryotic/mitochondrial release factor family. In terms of processing, methylated by PrmC. Methylation increases the termination efficiency of RF1.

The protein resides in the cytoplasm. Its function is as follows. Peptide chain release factor 1 directs the termination of translation in response to the peptide chain termination codons UAG and UAA. The chain is Peptide chain release factor 1 from Idiomarina loihiensis (strain ATCC BAA-735 / DSM 15497 / L2-TR).